A 252-amino-acid polypeptide reads, in one-letter code: MRFSILTLFPEMFAPLQASILGRGQKSGRLDLNLVQIRDFATDRHQNVDDTPFGGGPGMVLKPDILSHALRATLQGETAHVVYMSPQGSRFDQATAQRLAGYGHVVLLCGRYEGVDERFIDAHVDEELSVGDFVLTGGELPAMMVVDAVSRMVPGVLGDLESAQADSFQTGLLDHPHYTRPAHWVVDGDHYGAPEVLLSGNHGAIAEWRRRQALLRTLIRRPDLLGKAPLSRVEKRLIEALAVDLDALENKH.

Residues G110 and 130–135 each bind S-adenosyl-L-methionine; that span reads VGDFVL.

Belongs to the RNA methyltransferase TrmD family. In terms of assembly, homodimer.

The protein localises to the cytoplasm. It carries out the reaction guanosine(37) in tRNA + S-adenosyl-L-methionine = N(1)-methylguanosine(37) in tRNA + S-adenosyl-L-homocysteine + H(+). In terms of biological role, specifically methylates guanosine-37 in various tRNAs. The polypeptide is tRNA (guanine-N(1)-)-methyltransferase (Magnetococcus marinus (strain ATCC BAA-1437 / JCM 17883 / MC-1)).